The chain runs to 250 residues: Ribonuclease HII (250 aa).

The region spanning 66–250 (QLVAGVDEVG…SFAPVSEYEK (185 aa)) is the RNase H type-2 domain. The a divalent metal cation site is built by Asp-72, Glu-73, and Asp-164.

Belongs to the RNase HII family. The cofactor is Mn(2+). Requires Mg(2+) as cofactor.

Its subcellular location is the cytoplasm. The catalysed reaction is Endonucleolytic cleavage to 5'-phosphomonoester.. Its function is as follows. Endonuclease that specifically degrades the RNA of RNA-DNA hybrids. The polypeptide is Ribonuclease HII (Lactobacillus johnsonii (strain CNCM I-12250 / La1 / NCC 533)).